The sequence spans 316 residues: Olfactory receptor 10H3 (316 aa).

Residues 1 to 25 (MPGQNYRTISEFILSGFSAFPQQLL) are Extracellular-facing. The chain crosses the membrane as a helical span at residues 26-46 (PVLFLLYLLMFLFTLLGNLLI). Residues 47 to 54 (MATVWIER) are Cytoplasmic-facing. A helical membrane pass occupies residues 55–75 (RLHTPMYLFLCALSISEILFT). The Extracellular segment spans residues 76–99 (VAITPRMLADLLFTHRSITFVACA). A disulfide bridge links Cys-98 with Cys-190. The helical transmembrane segment at 100–120 (IQMFFSFMFGFTHSFLLMVMG) threads the bilayer. Topologically, residues 121–139 (YDHYVTICHPLHYNMLMSP) are cytoplasmic. The chain crosses the membrane as a helical span at residues 140–160 (RGCAHLVAWTWAGGSVMGMMV). Residues 161–197 (TMMVFHLTFCGSNVIHHFLCHVLSLLKLACGSKTSSV) lie on the Extracellular side of the membrane. The helical transmembrane segment at 198 to 218 (IMGVMLVCVTALIGCLFLIIL) threads the bilayer. The Cytoplasmic portion of the chain corresponds to 219-238 (SFVFIVAAILRIPSAEGRHK). Residues 239 to 259 (TFSTCVSHLTVVVMHYSFASL) form a helical membrane-spanning segment. Over 260 to 272 (IYLKPKGLHSMYS) the chain is Extracellular. The helical transmembrane segment at 273 to 293 (DALMATTYTVFTPFLSPIIFS) threads the bilayer. The Cytoplasmic portion of the chain corresponds to 294–316 (LRNKELKNAINKNFCRRFCPLSS).

The protein belongs to the G-protein coupled receptor 1 family.

The protein localises to the cell membrane. In terms of biological role, odorant receptor. This chain is Olfactory receptor 10H3 (OR10H3), found in Homo sapiens (Human).